Here is a 361-residue protein sequence, read N- to C-terminus: UDP-3-O-acylglucosamine N-acyltransferase (361 aa).

His-258 functions as the Proton acceptor in the catalytic mechanism.

This sequence belongs to the transferase hexapeptide repeat family. LpxD subfamily. As to quaternary structure, homotrimer.

The enzyme catalyses a UDP-3-O-[(3R)-3-hydroxyacyl]-alpha-D-glucosamine + a (3R)-hydroxyacyl-[ACP] = a UDP-2-N,3-O-bis[(3R)-3-hydroxyacyl]-alpha-D-glucosamine + holo-[ACP] + H(+). The protein operates within bacterial outer membrane biogenesis; LPS lipid A biosynthesis. Functionally, catalyzes the N-acylation of UDP-3-O-acylglucosamine using 3-hydroxyacyl-ACP as the acyl donor. Is involved in the biosynthesis of lipid A, a phosphorylated glycolipid that anchors the lipopolysaccharide to the outer membrane of the cell. The polypeptide is UDP-3-O-acylglucosamine N-acyltransferase (Nitrobacter hamburgensis (strain DSM 10229 / NCIMB 13809 / X14)).